The primary structure comprises 493 residues: MPMTGLLQTTLSTADQDRSGPAATTGDTPARANTKRLHVITWGCQMNVYDSARMTDVLSPLGYTAHAEPEGADMIVLNTCHIRDKATEKVFSELGRLRLLKEARAREGQPMLLAVAGCVAQAEGEQILARAPYVDIVLGPQTYHRLGGMVRRAMNGERVIETDFPPEDKFDYLPEAAAPQHGPGLAGGRTAFLTIQEGCDKFCSFCVVPYTRGAEVSRPASSVLAEARRMVRGGAREITLLGQNVNAYHGLGEDGEVWTLARLIRALADIPDLLRIRYTTSHPRDVSDDLIAAHRDIPQLMPFLHLPVQSGSDRILAAMNRRHTAEDYFRVVDRLREARPDLALSSDFIVGHPGETDEDFEDTMRLIERVGFAQAYSFKYSPRPGTPAAERDNHVPEPVMDERLQRLQALLRTQQEAFNTACIGKTVNVLLVTPGRHPGQIGGRSPWLQAVHLDAPATLIGQEVPVTITAAHTNSLSATLPDCAPHPKELTCA.

Polar residues predominate over residues 1–14; the sequence is MPMTGLLQTTLSTA. The segment at 1–31 is disordered; sequence MPMTGLLQTTLSTADQDRSGPAATTGDTPAR. The MTTase N-terminal domain occupies 35 to 155; that stretch reads KRLHVITWGC…LGGMVRRAMN (121 aa). Positions 44, 80, 118, 199, 203, and 206 each coordinate [4Fe-4S] cluster. Residues 185 to 417 enclose the Radical SAM core domain; it reads LAGGRTAFLT…QALLRTQQEA (233 aa). The 63-residue stretch at 420–482 folds into the TRAM domain; sequence TACIGKTVNV…TNSLSATLPD (63 aa).

This sequence belongs to the methylthiotransferase family. MiaB subfamily. Monomer. It depends on [4Fe-4S] cluster as a cofactor.

The protein resides in the cytoplasm. The enzyme catalyses N(6)-dimethylallyladenosine(37) in tRNA + (sulfur carrier)-SH + AH2 + 2 S-adenosyl-L-methionine = 2-methylsulfanyl-N(6)-dimethylallyladenosine(37) in tRNA + (sulfur carrier)-H + 5'-deoxyadenosine + L-methionine + A + S-adenosyl-L-homocysteine + 2 H(+). Its function is as follows. Catalyzes the methylthiolation of N6-(dimethylallyl)adenosine (i(6)A), leading to the formation of 2-methylthio-N6-(dimethylallyl)adenosine (ms(2)i(6)A) at position 37 in tRNAs that read codons beginning with uridine. This Granulibacter bethesdensis (strain ATCC BAA-1260 / CGDNIH1) protein is tRNA-2-methylthio-N(6)-dimethylallyladenosine synthase.